We begin with the raw amino-acid sequence, 257 residues long: UPF0246 protein AHA_3667 (257 aa).

The protein belongs to the UPF0246 family.

The sequence is that of UPF0246 protein AHA_3667 from Aeromonas hydrophila subsp. hydrophila (strain ATCC 7966 / DSM 30187 / BCRC 13018 / CCUG 14551 / JCM 1027 / KCTC 2358 / NCIMB 9240 / NCTC 8049).